Consider the following 125-residue polypeptide: Small ribosomal subunit protein uS13 (125 aa).

The tract at residues 95 to 125 is disordered; it reads GLPVRGQRTKNNCRTRKGKRKTVANKKKATK.

It belongs to the universal ribosomal protein uS13 family. In terms of assembly, part of the 30S ribosomal subunit. Forms a loose heterodimer with protein S19. Forms two bridges to the 50S subunit in the 70S ribosome.

Located at the top of the head of the 30S subunit, it contacts several helices of the 16S rRNA. In the 70S ribosome it contacts the 23S rRNA (bridge B1a) and protein L5 of the 50S subunit (bridge B1b), connecting the 2 subunits; these bridges are implicated in subunit movement. Contacts the tRNAs in the A and P-sites. This is Small ribosomal subunit protein uS13 from Cytophaga hutchinsonii (strain ATCC 33406 / DSM 1761 / CIP 103989 / NBRC 15051 / NCIMB 9469 / D465).